Consider the following 398-residue polypeptide: Stabilizer of axonemal microtubules 2 (398 aa).

6 mn regions span residues 114 to 126, 148 to 162, 248 to 260, 282 to 296, 316 to 328, and 350 to 364; these read STTFQDDFVPQEI, ITSHRLDYIPHQLEL, NSTSHLDYVPYQA, KSIMKEDFPAWESCR, LSTFRSHYVPHEL, and VTMYSVEYTPKRQEI.

Belongs to the FAM154 family.

The protein is Stabilizer of axonemal microtubules 2 (SAXO2) of Homo sapiens (Human).